A 277-amino-acid polypeptide reads, in one-letter code: Tryptophan synthase alpha chain (277 aa).

Residues glutamate 42 and glutamate 53 each act as proton acceptor in the active site.

This sequence belongs to the TrpA family. As to quaternary structure, tetramer of two alpha and two beta chains.

The catalysed reaction is (1S,2R)-1-C-(indol-3-yl)glycerol 3-phosphate + L-serine = D-glyceraldehyde 3-phosphate + L-tryptophan + H2O. The protein operates within amino-acid biosynthesis; L-tryptophan biosynthesis; L-tryptophan from chorismate: step 5/5. Its function is as follows. The alpha subunit is responsible for the aldol cleavage of indoleglycerol phosphate to indole and glyceraldehyde 3-phosphate. The chain is Tryptophan synthase alpha chain from Natronomonas pharaonis (strain ATCC 35678 / DSM 2160 / CIP 103997 / JCM 8858 / NBRC 14720 / NCIMB 2260 / Gabara) (Halobacterium pharaonis).